The sequence spans 754 residues: 1,4-alpha-glucan branching enzyme GlgB (754 aa).

Residue Asp-431 is the Nucleophile of the active site. Glu-484 functions as the Proton donor in the catalytic mechanism.

The protein belongs to the glycosyl hydrolase 13 family. GlgB subfamily. Monomer.

It catalyses the reaction Transfers a segment of a (1-&gt;4)-alpha-D-glucan chain to a primary hydroxy group in a similar glucan chain.. It functions in the pathway glycan biosynthesis; glycogen biosynthesis. Catalyzes the formation of the alpha-1,6-glucosidic linkages in glycogen by scission of a 1,4-alpha-linked oligosaccharide from growing alpha-1,4-glucan chains and the subsequent attachment of the oligosaccharide to the alpha-1,6 position. In Prochlorococcus marinus (strain MIT 9215), this protein is 1,4-alpha-glucan branching enzyme GlgB.